The following is a 241-amino-acid chain: GPI-anchored hemophore RBT5 (241 aa).

The signal sequence occupies residues 1–20; the sequence is MLALSLLSIVSIASAAGVTA. The 112-residue stretch at 26-137 folds into the CFEM domain; sequence NPYTIFPSVA…DALAKAADAA (112 aa). Disulfide bonds link Cys54–Cys94, Cys58–Cys89, Cys68–Cys75, and Cys77–Cys110. Asp72 is a binding site for heme. 2 stretches are compositionally biased toward low complexity: residues 140–154 and 163–182; these read TTAE…AAET and KETT…PAET. The interval 140-210 is disordered; it reads TTAESTTAES…SVAQSSSSAA (71 aa). Residues 183 to 199 show a composition bias toward basic and acidic residues; the sequence is SKAEETSKAAETTKAEE. Positions 200 to 210 are enriched in low complexity; the sequence is SSVAQSSSSAA. A lipid anchor (GPI-anchor amidated asparagine) is attached at Asn221. The propeptide at 222–241 is removed in mature form; sequence AGNMPAVAIGGVIAAVAALF.

It belongs to the RBT5 family. As to quaternary structure, interacts with PGA7. In terms of processing, the GPI-anchor is attached to the protein in the endoplasmic reticulum and serves to target the protein to the cell surface. There, the glucosamine-inositol phospholipid moiety is cleaved off and the GPI-modified mannoprotein is covalently attached via its lipidless GPI glycan remnant to the 1,6-beta-glucan of the outer cell wall layer. Post-translationally, mannosylated.

The protein localises to the secreted. The protein resides in the cell wall. It localises to the cell membrane. Functionally, GPI-linked hyphal surface heme-binding protein involved in heme-iron utilization. Heme transfer occurs between PGA7, RBT5 and CSA2 supporting a model in which the 3 CFEM proteins cooperate in a heme-acquisition system and form a cross-cell wall heme-transfer cascade. The ability to acquire iron from host tissues is a major virulence factor of pathogenic microorganisms. Required for biofilm formation. The protein is GPI-anchored hemophore RBT5 of Candida albicans (strain SC5314 / ATCC MYA-2876) (Yeast).